The following is a 175-amino-acid chain: Nucleoside triphosphate/diphosphate phosphatase (175 aa).

Residue Arg23 is the Proton donor of the active site. Residues Asn87, Asp103, Asp105, Asp107, Asp120, and Glu123 each coordinate Mg(2+).

Belongs to the Ntdp family. Mg(2+) serves as cofactor.

It catalyses the reaction a ribonucleoside 5'-triphosphate + H2O = a ribonucleoside 5'-diphosphate + phosphate + H(+). It carries out the reaction a ribonucleoside 5'-diphosphate + H2O = a ribonucleoside 5'-phosphate + phosphate + H(+). Its function is as follows. Has nucleoside phosphatase activity towards nucleoside triphosphates and nucleoside diphosphates. In Halalkalibacterium halodurans (strain ATCC BAA-125 / DSM 18197 / FERM 7344 / JCM 9153 / C-125) (Bacillus halodurans), this protein is Nucleoside triphosphate/diphosphate phosphatase.